Consider the following 478-residue polypeptide: Proton-coupled amino acid transporter 2 (478 aa).

Polar residues-rich tracts occupy residues 1–14 (MSVT…QVAT) and 26–37 (KLQSQDPSPANG). The interval 1 to 46 (MSVTKSARSPQVATPLNLDLPESAKKLQSQDPSPANGSSSESSKKT) is disordered. Residues 1–53 (MSVTKSARSPQVATPLNLDLPESAKKLQSQDPSPANGSSSESSKKTKGITGFQ) lie on the Cytoplasmic side of the membrane. Residues 54–74 (TLVHLVKGNMGTGILGLPLAV) form a helical membrane-spanning segment. Residues 75-76 (KN) are Extracellular-facing. The chain crosses the membrane as a helical span at residues 77-97 (AGILMGPLSLLVMGLIACHCM). Residues 98-143 (HILVRCAQRFCHRLNKPFMDYGDTVMHGLAFSPNAWLQNHAHWGRR) lie on the Cytoplasmic side of the membrane. The helical transmembrane segment at 144 to 164 (VVSFFLIVTQLGFCCVYIVFL) threads the bilayer. The Extracellular portion of the chain corresponds to 165-192 (ADNLKQVVEAVNSTTISCHKNETVVLTP). A helical transmembrane segment spans residues 193-213 (TMDSRLYMLSFLPVLGLLVFV). Topologically, residues 214–217 (RNLR) are cytoplasmic. The chain crosses the membrane as a helical span at residues 218-238 (VLTIFSLLANISMLVSLVIIA). Residues 239-259 (QYIIQEIPDASQLPLVASWKT) are Extracellular-facing. Residues 260-280 (YPLFFGTAIFSFESIGVVLPL) traverse the membrane as a helical segment. Residues 281-292 (ENKMKDARGFPT) are Cytoplasmic-facing. Residues 293–313 (ILSLGMSIITTLYIAIGALGY) form a helical membrane-spanning segment. Over 314 to 340 (LRFGDDIKASITLNLPNCWLYQSVKLL) the chain is Extracellular. Residues 341-361 (YVVGILCTYALQFYVPAEIII) form a helical membrane-spanning segment. Residues 362-374 (PLAVSQVSKRWAL) lie on the Cytoplasmic side of the membrane. A helical membrane pass occupies residues 375–395 (PVDLSIRLALVCLTCMLAILI). At 396–399 (PRLD) the chain is on the extracellular side. A helical transmembrane segment spans residues 400–420 (LVLSLVGSVSSSALALIIPPL). The Cytoplasmic portion of the chain corresponds to 421–441 (LEVVTYYGEGISPLTVTKDAL). A helical membrane pass occupies residues 442 to 462 (ISILGFMGFVVGTYQALDELI). Topologically, residues 463–478 (KSGNSPALSNSTMFIQ) are extracellular.

It belongs to the amino acid/polyamine transporter 2 family. As to expression, expressed in spinal cord, brain, testis, lung, heart, colon, spleen, kidney and muscle. Found in neuronal cell bodies in the anterior horn, in spinal cord brain stem, cerebellum, hippocampus, hypothalamus, rhinencephalon, cerebral cortex, and olfactory bulb in the brain. Also expressed in bone and fat tissues.

The protein localises to the cell membrane. It is found in the endoplasmic reticulum membrane. The protein resides in the recycling endosome membrane. The enzyme catalyses glycine(in) + H(+)(in) = glycine(out) + H(+)(out). It catalyses the reaction L-alanine(in) + H(+)(in) = L-alanine(out) + H(+)(out). It carries out the reaction D-alanine(in) + H(+)(in) = D-alanine(out) + H(+)(out). The catalysed reaction is L-proline(out) + H(+)(out) = L-proline(in) + H(+)(in). The enzyme catalyses D-proline(out) + H(+)(out) = D-proline(in) + H(+)(in). It catalyses the reaction 4-hydroxy-L-proline(in) + H(+)(in) = 4-hydroxy-L-proline(out) + H(+)(out). It carries out the reaction L-serine(in) + H(+)(in) = L-serine(out) + H(+)(out). The catalysed reaction is D-serine(out) + H(+)(out) = D-serine(in) + H(+)(in). The enzyme catalyses beta-alanine(in) + H(+)(in) = beta-alanine(out) + H(+)(out). It catalyses the reaction 4-aminobutanoate(in) + H(+)(in) = 4-aminobutanoate(out) + H(+)(out). It carries out the reaction sarcosine(in) + H(+)(in) = sarcosine(out) + H(+)(out). The catalysed reaction is N,N-dimethylglycine(in) + H(+)(in) = N,N-dimethylglycine(out) + H(+)(out). Electrogenic proton/amino acid symporter with a high selectivity for the small side chains amino acids glycine, alanine and proline, where both L- and D-enantiomers are transported. Extension of the backbone length, as in beta-alanine and 4-aminobutanoate or methylation of the amino group, as in sarcosine and N,N-dimethylglycine, are also tolerated but decrease transport efficiency. A free carboxyl group is preferred. In Mus musculus (Mouse), this protein is Proton-coupled amino acid transporter 2.